A 988-amino-acid chain; its full sequence is UPF0182 protein MAB_3498c (988 aa).

Helical transmembrane passes span 19 to 39, 63 to 83, 114 to 134, 176 to 196, 211 to 231, 260 to 280, and 288 to 308; these read LVAA…LVDT, LALF…GFGL, LFLI…AQSY, FIAA…FGGI, IQLI…YWLD, KLIL…ALVL, and IGLA…PLIV.

Belongs to the UPF0182 family.

The protein localises to the cell membrane. This is UPF0182 protein MAB_3498c from Mycobacteroides abscessus (strain ATCC 19977 / DSM 44196 / CCUG 20993 / CIP 104536 / JCM 13569 / NCTC 13031 / TMC 1543 / L948) (Mycobacterium abscessus).